Here is a 562-residue protein sequence, read N- to C-terminus: MVKIRIRSPLWYDGVDNAPHRSYLKAIGFTEEDFSKPIVGVLASWSELGPCNYHTLELAKYVKEGIKEAGGVGLAAPTIVVNDGINMGTPGMRYSLISRDLIADTIEAQFNAHGVDAWVGIGGCDKTQPGIMMAMVRLDIPAVYLYGGTAEAGWLGERELTIEDTFEAVGAYLAGRITLEDLKRIEELSFPSYGTCQGLFTANTMAMIGEALGLSLLGSASPPATSSRRRAFAIASGRAVLKAAELGITPRKVVTYDALYNAAVTLFATAGSTNAILHLLAIAHEAGVKFTLDDFDEISKKVPVIAALRPAGPYAMQDLDKIGGVPRILKKLYKAGLLRGEALTVEGETIGKLLDRWQPPPLPEAGVLYDVDRPYKPYSGIRILRGNLAPNGAVMKVGAAERLKFEGRAKVYDSEAEAFKAVASGEIKAGDVVVIRYEGPKGAPGMPEMLKITAAIVGAGLGEVVALITDGRFSGATRGIMVGHVSPEAAVGGPIALVQNGDRIVIDGEAGLLKLELGEEELERRRKNWSPPPPKYKGGLLAKYASLVQQADKGAVTSPPVL.

Cysteine 51 lines the [2Fe-2S] cluster pocket. Aspartate 83 provides a ligand contact to Mg(2+). Cysteine 124 is a binding site for [2Fe-2S] cluster. 2 residues coordinate Mg(2+): aspartate 125 and lysine 126. Lysine 126 carries the N6-carboxylysine modification. Cysteine 196 is a [2Fe-2S] cluster binding site. Glutamate 448 serves as a coordination point for Mg(2+). Serine 474 serves as the catalytic Proton acceptor.

The protein belongs to the IlvD/Edd family. As to quaternary structure, homodimer. The cofactor is [2Fe-2S] cluster. Mg(2+) is required as a cofactor.

It carries out the reaction (2R)-2,3-dihydroxy-3-methylbutanoate = 3-methyl-2-oxobutanoate + H2O. The enzyme catalyses (2R,3R)-2,3-dihydroxy-3-methylpentanoate = (S)-3-methyl-2-oxopentanoate + H2O. It functions in the pathway amino-acid biosynthesis; L-isoleucine biosynthesis; L-isoleucine from 2-oxobutanoate: step 3/4. The protein operates within amino-acid biosynthesis; L-valine biosynthesis; L-valine from pyruvate: step 3/4. Functionally, functions in the biosynthesis of branched-chain amino acids. Catalyzes the dehydration of (2R,3R)-2,3-dihydroxy-3-methylpentanoate (2,3-dihydroxy-3-methylvalerate) into 2-oxo-3-methylpentanoate (2-oxo-3-methylvalerate) and of (2R)-2,3-dihydroxy-3-methylbutanoate (2,3-dihydroxyisovalerate) into 2-oxo-3-methylbutanoate (2-oxoisovalerate), the penultimate precursor to L-isoleucine and L-valine, respectively. This chain is Dihydroxy-acid dehydratase, found in Pyrobaculum aerophilum (strain ATCC 51768 / DSM 7523 / JCM 9630 / CIP 104966 / NBRC 100827 / IM2).